We begin with the raw amino-acid sequence, 370 residues long: MEGVDLLGFLIITLNCNVTMXGKLWFVLTMLLRMLVIVLAGRPVYQDEQERFVCNTLQPGCANVCYDVFSPVSHLRFWLIQGVCVLLPSAVFSVYVLHRGATLAALGPRRCPEPRDTASGQRRCPGSCRERGGLEVPDFSAGYIIHLLLRTLLEAAFGALNYLLFGFLAPNKFPCTRPPCTGVVDCYVSRPTEKSLLMLFLWAVSALSFLLGLADLVCSLRRLMRRRPGPPTSPSIRKQSGAPGHPEGRPTDKEGGREQEGAPAPPVARAGGEGAGSPRVTSRVSGHTKIPDEDASEVTSSASEKLGRQPRGRPYREAAQDPRGSGSEEQPSAAPSHLAAHPSCSRLQPPDPPASSVGAPHLRARKSEWV.

At Met1 to Thr19 the chain is on the cytoplasmic side. The helical transmembrane segment at Met20–Ala40 threads the bilayer. At Gly41–Arg76 the chain is on the extracellular side. Residues Phe77 to Leu97 traverse the membrane as a helical segment. At His98–His146 the chain is on the cytoplasmic side. A helical membrane pass occupies residues Leu147–Phe167. The Extracellular segment spans residues Leu168 to Leu196. A helical transmembrane segment spans residues Leu197–Val217. Residues Cys218–Val370 lie on the Cytoplasmic side of the membrane. Residues Arg227–Val370 form a disordered region. Over residues Pro246–Glu260 the composition is skewed to basic and acidic residues. The span at Pro331–Ser345 shows a compositional bias: low complexity.

Belongs to the connexin family. Delta-type subfamily. As to quaternary structure, a connexon is composed of a hexamer of connexins.

The protein localises to the cell membrane. Its subcellular location is the cell junction. It localises to the gap junction. In terms of biological role, one gap junction consists of a cluster of closely packed pairs of transmembrane channels, the connexons, through which materials of low MW diffuse from one cell to a neighboring cell. The polypeptide is Gap junction delta-4 protein (GJD4) (Macaca fascicularis (Crab-eating macaque)).